Consider the following 152-residue polypeptide: MPVTSELILAALLLVGVLAKSHLIAAAACILLFIKLARFDLAFNFLEQKGLELGLLILLLTIMVPLANGKISERDIIYNLTSIPGLLAILGGALATHLNSQGLQMMQADPAIIFGLIIGSIFGILFLGGMPVGPLMAAGIAALFMEFFKYTK.

The next 4 helical transmembrane spans lie at 14–34 (LVGVLAKSHLIAAAACILLFI), 51–71 (LELGLLILLLTIMVPLANGKI), 76–96 (IIYNLTSIPGLLAILGGALAT), and 112–132 (IIFGLIIGSIFGILFLGGMPV).

This sequence belongs to the UPF0756 family.

The protein resides in the cell membrane. The protein is UPF0756 membrane protein Daud_1310 of Desulforudis audaxviator (strain MP104C).